We begin with the raw amino-acid sequence, 3640 residues long: Serine/threonine-protein kinase SMG1 (3640 aa).

A compositionally biased stretch (polar residues) spans 21–34 (NDWQPRSDSLSASQ). The segment at 21 to 41 (NDWQPRSDSLSASQDGVKCSV) is disordered. The FAT domain maps to 1495–1843 (YCHSGKCELA…LYPAIVGSIS (349 aa)). One copy of the HEAT repeat lies at 1794–1829 (APWRGIIPQLFSRLNHPEAYIRQSICSLLCRVAQDS). A disordered region spans residues 1870-1890 (GLCGGESETGSGPTSQESSRG). Low complexity predominate over residues 1874–1887 (GESETGSGPTSQES). The 340-residue stretch at 2102–2441 (VGNTITILPT…MERDITRSLF (340 aa)) folds into the PI3K/PI4K catalytic domain. A G-loop region spans residues 2108–2114 (ILPTKTK). A catalytic loop region spans residues 2310–2318 (GLGDRHLDN). Positions 2330-2354 (HIDYNVCFEKGKSLRVPEKVPFRMT) are activation loop. Residues 3608-3640 (RRMSVTEQVDYVIKEATNVDNLAQLYEGWTAWV) enclose the FATC domain.

It belongs to the PI3/PI4-kinase family. It depends on Mn(2+) as a cofactor. Autophosphorylated.

Its subcellular location is the nucleus. The protein resides in the cytoplasm. It catalyses the reaction L-seryl-[protein] + ATP = O-phospho-L-seryl-[protein] + ADP + H(+). The catalysed reaction is L-threonyl-[protein] + ATP = O-phospho-L-threonyl-[protein] + ADP + H(+). In terms of biological role, serine/threonine protein kinase involved in both mRNA surveillance and genotoxic stress response pathways. Recognizes the substrate consensus sequence [ST]-Q. Plays a central role in nonsense-mediated decay (NMD) of mRNAs containing premature stop codons by phosphorylating UPF1/RENT1. The chain is Serine/threonine-protein kinase SMG1 from Danio rerio (Zebrafish).